The sequence spans 627 residues: ATP-dependent zinc metalloprotease FtsH 2 (627 aa).

The Cytoplasmic portion of the chain corresponds to 1 to 7 (MKFSWRT). A helical membrane pass occupies residues 8 to 28 (ALLWSLPLLVVGFFFWQGSFG). Residues 29–117 (GADANLGSNT…SHPVRNNGMV (89 aa)) lie on the Lumenal side of the membrane. The chain crosses the membrane as a helical span at residues 118 to 138 (WGFVGNLIFPVLLIASLFFLF). Residues 139–627 (RRSSNMPGGP…PVKEQLIPQL (489 aa)) are Cytoplasmic-facing. 212–219 (GPPGTGKT) serves as a coordination point for ATP. Zn(2+) is bound at residue H433. E434 is an active-site residue. Zn(2+)-binding residues include H437 and D511.

The protein in the central section; belongs to the AAA ATPase family. In the C-terminal section; belongs to the peptidase M41 family. As to quaternary structure, homohexamer (Potential). Part of a large (&gt;500 kDa) complex that includes FtsH3 and PSII. Coimmunoprecipitates with YidC. The cofactor is Zn(2+).

It localises to the cellular thylakoid membrane. Its function is as follows. Acts as a processive, ATP-dependent zinc metallopeptidase for both cytoplasmic and membrane proteins. Plays a role in the quality control of integral membrane proteins. Plays a role in the selective replacement of photosystem II (PSII) protein D1 in the PSII repair cycle following visible-light and UV-B induced damage. If damaged D1 is not removed then new D1 cannot be inserted to restore the PSII reaction center. Seems to also degrade damaged and/or unassembled PSII proteins D2 and PsbB (CP47). May recognize D1 via its first 20 amino acids, as deletion of these prevents the PSII repair cycle. Also seems to degrade cytoplasmic GGPS, glucosylglycerol-phosphate synthase. The chain is ATP-dependent zinc metalloprotease FtsH 2 (ftsH2) from Synechocystis sp. (strain ATCC 27184 / PCC 6803 / Kazusa).